The primary structure comprises 353 residues: Photosystem II protein D1 (353 aa).

N-acetylthreonine is present on threonine 2. Threonine 2 is modified (phosphothreonine). Helical transmembrane passes span 29–46 (YIGW…TAIS), 118–133 (HFLL…EWEL), and 142–156 (WIAV…AATA). Histidine 118 provides a ligand contact to chlorophyll a. Residue tyrosine 126 coordinates pheophytin a. 2 residues coordinate [CaMn4O5] cluster: aspartate 170 and glutamate 189. Residues 197 to 218 (FHMLGVAGVFGGSLFSAMHGSL) form a helical membrane-spanning segment. Histidine 198 contacts chlorophyll a. Residues histidine 215 and 264–265 (SF) each bind a quinone. Histidine 215 is a Fe cation binding site. A Fe cation-binding site is contributed by histidine 272. Residues 274–288 (FLAVWPVVGIWFTAM) traverse the membrane as a helical segment. Residues histidine 332, glutamate 333, aspartate 342, and alanine 344 each contribute to the [CaMn4O5] cluster site. A propeptide spanning residues 345–353 (SVEAPAVNG) is cleaved from the precursor.

Belongs to the reaction center PufL/M/PsbA/D family. As to quaternary structure, PSII is composed of 1 copy each of membrane proteins PsbA, PsbB, PsbC, PsbD, PsbE, PsbF, PsbH, PsbI, PsbJ, PsbK, PsbL, PsbM, PsbT, PsbX, PsbY, PsbZ, Psb30/Ycf12, at least 3 peripheral proteins of the oxygen-evolving complex and a large number of cofactors. It forms dimeric complexes. Requires The D1/D2 heterodimer binds P680, chlorophylls that are the primary electron donor of PSII, and subsequent electron acceptors. It shares a non-heme iron and each subunit binds pheophytin, quinone, additional chlorophylls, carotenoids and lipids. D1 provides most of the ligands for the Mn4-Ca-O5 cluster of the oxygen-evolving complex (OEC). There is also a Cl(-1) ion associated with D1 and D2, which is required for oxygen evolution. The PSII complex binds additional chlorophylls, carotenoids and specific lipids. as cofactor. In terms of processing, tyr-161 forms a radical intermediate that is referred to as redox-active TyrZ, YZ or Y-Z. C-terminally processed by CTPA; processing is essential to allow assembly of the oxygen-evolving complex and thus photosynthetic growth.

The protein localises to the plastid. It is found in the chloroplast thylakoid membrane. It carries out the reaction 2 a plastoquinone + 4 hnu + 2 H2O = 2 a plastoquinol + O2. In terms of biological role, photosystem II (PSII) is a light-driven water:plastoquinone oxidoreductase that uses light energy to abstract electrons from H(2)O, generating O(2) and a proton gradient subsequently used for ATP formation. It consists of a core antenna complex that captures photons, and an electron transfer chain that converts photonic excitation into a charge separation. The D1/D2 (PsbA/PsbD) reaction center heterodimer binds P680, the primary electron donor of PSII as well as several subsequent electron acceptors. In Mesostigma viride (Green alga), this protein is Photosystem II protein D1.